A 192-amino-acid chain; its full sequence is MGLLNSKNPQSKQAHILLLGLDSAGKSTLLYRLKFAETLATIPTIGFNVEMVQLQSSLTLTVWDVGGQEKMRTVWDCYCENAQGLMYVVDCSEGKKRLEDSRKEFKHILKNEHIKNTPVVILANKQDLPGALSAEDITRMFKVKKLCSNRNWYVQPCCAVTGEGLDDGFRKLTEFLKSYRRTRETLAIFKQK.

Glycine 2 carries the N-myristoyl glycine lipid modification. GTP is bound by residues glycine 20–serine 27, aspartate 64–glutamine 68, and asparagine 124–aspartate 127.

It belongs to the small GTPase superfamily. Arf family. In terms of assembly, interacts with ARL14EP.

The protein localises to the cytoplasmic vesicle. GTPase that recruits MYO1E to MHC class II-containing vesicles via the effector protein ARL14EP and hence controls the movement of these vesicles along the actin cytoskeleton in dendritic cells. This Mus musculus (Mouse) protein is ADP-ribosylation factor-like protein 14 (Arl14).